The chain runs to 356 residues: Fructose-1,6-bisphosphatase class 1 1 (356 aa).

Residues E106, D129, L131, and D132 each coordinate Mg(2+). Substrate is bound by residues 132-135 (DGSS), N225, Y258, and K288. E294 lines the Mg(2+) pocket.

Belongs to the FBPase class 1 family. In terms of assembly, homotetramer. Requires Mg(2+) as cofactor.

The protein localises to the cytoplasm. The enzyme catalyses beta-D-fructose 1,6-bisphosphate + H2O = beta-D-fructose 6-phosphate + phosphate. It participates in carbohydrate biosynthesis; gluconeogenesis. The polypeptide is Fructose-1,6-bisphosphatase class 1 1 (Salinibacter ruber (strain DSM 13855 / M31)).